A 323-amino-acid polypeptide reads, in one-letter code: Viral cathepsin (323 aa).

A signal peptide spans Met1 to Ser16. A propeptide spans Ala17–Gly112 (activation peptide). 3 disulfides stabilise this stretch: Cys133-Cys174, Cys167-Cys207, and Cys262-Cys310. Cys136 is an active-site residue. N-linked (GlcNAc...) asparagine; by host glycosylation occurs at Asn158. Active-site residues include His269 and Asn289.

It belongs to the peptidase C1 family. In terms of assembly, interacts with chitinase/CHIA; this interaction maintains VCATH in the host endoplasmic reticulum. Synthesized as an inactive proenzyme and activated by proteolytic removal of the inhibitory propeptide.

Its subcellular location is the host endoplasmic reticulum. The catalysed reaction is Endopeptidase of broad specificity, hydrolyzing substrates of both cathepsin L and cathepsin B.. Functionally, cysteine protease that plays an essential role in host liquefaction to facilitate horizontal transmission of the virus. Accumulates within infected cells as an inactive proenzyme (proV-CATH), which is activated by proteolytic cleavage upon cell death. The chain is Viral cathepsin (VCATH) from Lepidoptera (butterflies and moths).